A 417-amino-acid chain; its full sequence is MINTNLKNYDPKIWKLIIKEKKRQESYINLIASENYVSSSILEAQGSCLTNKYAEGYIGNRFYNGCNIIDKIEKIAIKRAKKLFNVEYVNVQPHSGSQANFSVFNALLKPNDIILGMNLNHGGHLTHGSTVNFSGKLYKSFSYGVNKCGEIDYDALKYLSHLHRPKMIIGGFSAYSGICDWKYMRKIADEINAYFFVDISHIVGLIVAGIYPNPLKYAHVVSTTTHKTLGGPRGGLIISNCGNKKIYSKLDSSVFPGSQGGPLMHVIAAKAISFKEALEPKFFLLQKNILFFSKKMVKIFLKRNFSVISGKTNNHLFLIDLSEKKISGKEASNILALARIIVNKNTIPNDSQSPYITSGIRIGTPAIVKRGISIKYVIKITNWICDILNEPNNLIKIKKISKKIKKICYKYPIYNKI.

(6S)-5,6,7,8-tetrahydrofolate is bound by residues leucine 119 and glycine 123 to leucine 125. Position 227 is an N6-(pyridoxal phosphate)lysine (lysine 227).

The protein belongs to the SHMT family. Homodimer. The cofactor is pyridoxal 5'-phosphate.

The protein localises to the cytoplasm. The catalysed reaction is (6R)-5,10-methylene-5,6,7,8-tetrahydrofolate + glycine + H2O = (6S)-5,6,7,8-tetrahydrofolate + L-serine. It participates in one-carbon metabolism; tetrahydrofolate interconversion. Its pathway is amino-acid biosynthesis; glycine biosynthesis; glycine from L-serine: step 1/1. Catalyzes the reversible interconversion of serine and glycine with tetrahydrofolate (THF) serving as the one-carbon carrier. This reaction serves as the major source of one-carbon groups required for the biosynthesis of purines, thymidylate, methionine, and other important biomolecules. Also exhibits THF-independent aldolase activity toward beta-hydroxyamino acids, producing glycine and aldehydes, via a retro-aldol mechanism. The chain is Serine hydroxymethyltransferase from Buchnera aphidicola subsp. Cinara cedri (strain Cc).